The sequence spans 430 residues: MANVVVVGAQWGDEGKGKIVDWLSERADVIARFQGGHNAGHTLVIGNQVFKLSLLPSGIVRKGKMAVIGNGVVLDPWSLFAEIDKLSAQGVEISPANLMIAENTPLILPLHQDLDKLREEAAGASKIGTTGRGIGPAYEDKVGRRTIRVADLGDEETLDSRLDRLLAHHDALRQGLGAAPIDRAELRAKLLEIAPKLLQYAQPVWKVMNDYRKAGKRILFEGAQGSLLDIDFGTYPYVTSSTTMSGMAASGTGLGPSAIGFVLGIVKAYTTRVGEGPFPTELDDADGQRLGERGHEFGTVTGRKRRCGWFDAVLVRQTCAISGVDGIALTKLDVLDGFQTLKICTGYEVDGQHYDHLPTAASLQAKAKPVYEEMEGWQESTQGARSWADLPANAIKYVRRIEELIQCPVALLSTSPERDDTILVTDPFAD.

Residues 12–18 (GDEGKGK) and 40–42 (GHT) contribute to the GTP site. Catalysis depends on Asp13, which acts as the Proton acceptor. Positions 13 and 40 each coordinate Mg(2+). IMP is bound by residues 13-16 (DEGK), 38-41 (NAGH), Thr130, Arg144, Gln224, Thr239, and Arg303. His41 serves as the catalytic Proton donor. 299–305 (TVTGRKR) lines the substrate pocket. Residues Arg305, 331–333 (KLD), and 413–415 (STS) each bind GTP.

Belongs to the adenylosuccinate synthetase family. As to quaternary structure, homodimer. Mg(2+) is required as a cofactor.

The protein resides in the cytoplasm. It carries out the reaction IMP + L-aspartate + GTP = N(6)-(1,2-dicarboxyethyl)-AMP + GDP + phosphate + 2 H(+). Its pathway is purine metabolism; AMP biosynthesis via de novo pathway; AMP from IMP: step 1/2. Functionally, plays an important role in the de novo pathway of purine nucleotide biosynthesis. Catalyzes the first committed step in the biosynthesis of AMP from IMP. The chain is Adenylosuccinate synthetase from Paracoccus denitrificans (strain Pd 1222).